A 232-amino-acid polypeptide reads, in one-letter code: Pirin-like protein CC_1473 (232 aa).

Belongs to the pirin family.

The polypeptide is Pirin-like protein CC_1473 (Caulobacter vibrioides (strain ATCC 19089 / CIP 103742 / CB 15) (Caulobacter crescentus)).